Here is a 75-residue protein sequence, read N- to C-terminus: MAFLKKSLFLVLFLGMVSLSICEEEKRENEDEEEQEDDEQSEEKRALWKTLLKGAGKVFGHVAKQFLGSQGQPES.

The signal sequence occupies residues 1 to 22; it reads MAFLKKSLFLVLFLGMVSLSIC. The propeptide occupies 23–45; the sequence is EEEKRENEDEEEQEDDEQSEEKR. The disordered stretch occupies residues 25–44; sequence EKRENEDEEEQEDDEQSEEK. Acidic residues predominate over residues 30–41; sequence EDEEEQEDDEQS.

Belongs to the frog skin active peptide (FSAP) family. Dermaseptin subfamily. As to expression, expressed by the skin glands.

The protein localises to the secreted. It is found in the target cell membrane. Its function is as follows. Antimicrobial peptide with activity against Gram-positive and Gram-negative bacteria, and fungi. Has hemolytic activity. This is Dermaseptin-S11 from Phyllomedusa sauvagei (Sauvage's leaf frog).